The primary structure comprises 1455 residues: Membrane-associated guanylate kinase, WW and PDZ domain-containing protein 2 (1455 aa).

Positions 17-101 (ESVIGRNPEG…PLRLKCVKQG (85 aa)) constitute a PDZ 1 domain. In terms of domain architecture, Guanylate kinase-like spans 109–283 (RHYLNLRFQK…APVYSQPEEL (175 aa)). The segment at 205 to 306 (PGATPSAEGK…DNEEPDPLPD (102 aa)) is disordered. Over residues 241–252 (VVNGNGVVVTPE) the composition is skewed to low complexity. Over residues 281–296 (EELKEQMDDTKPTKPE) the composition is skewed to basic and acidic residues. 2 WW domains span residues 302–335 (DPLPDNWEMAYTEKGEVYFIDHNTKTTSWLDPRL) and 348–381 (NELPYGWEKIDDPIYGTYYVDHINRRTQFENPVL). Positions 302 to 381 (DPLPDNWEMA…RRTQFENPVL (80 aa)) are interaction with DDN. At Tyr-362 the chain carries Phosphotyrosine. PDZ domains follow at residues 426–510 (STTL…CRGY) and 605–683 (TLTI…HRGG). Ser-686 is modified (phosphoserine). Residues 778–860 (DVHLRRMESG…NGQVNLTVRR (83 aa)) form the PDZ 4 domain. Residue Tyr-827 is modified to Phosphotyrosine. Residues 869–913 (CPENGRSPGSVSTHHSSPRSDYATYTNSNHAAPSSNASPPEGFAS) form a disordered region. Phosphoserine is present on residues Ser-884 and Ser-885. Residues 895-908 (NSNHAAPSSNASPP) are compositionally biased toward low complexity. The 91-residue stretch at 920 to 1010 (DVVIHRKENE…SVTLRIIPQE (91 aa)) folds into the PDZ 5 domain. Polar residues predominate over residues 1011-1040 (ELNSPTSAPSSEKQSPMAQQSPLAQQSPLA). The disordered stretch occupies residues 1011–1136 (ELNSPTSAPS…PDTRQYPLSD (126 aa)). Ser-1014 is subject to Phosphoserine. Residues 1067–1083 (NSYRSEVKARQDVKPDI) show a composition bias toward basic and acidic residues. One can recognise a PDZ 6 domain in the interval 1147–1229 (TVDMEKGAKG…RVRLLLKRGT (83 aa)). Residues 1231–1455 (QVPEYDEPAP…LKPGASAASR (225 aa)) are disordered. The span at 1238–1249 (PAPWSSPAAAAP) shows a compositional bias: low complexity. Over residues 1287 to 1299 (DIKREHDVRKPKE) the composition is skewed to basic and acidic residues. Composition is skewed to low complexity over residues 1346 to 1363 (EARAPGLAAADAADAARA), 1399 to 1412 (ALEAEGRAGARAGP), and 1422 to 1433 (APARKAAVAPGP).

The protein belongs to the MAGUK family. In terms of assembly, interacts (via its WW domains) with DRPLA. Interacts (via its second PDZ domain) with PTEN (via unphosphorylated C-terminus); this interaction diminishes the degradation rate of PTEN. Interacts (via guanylate kinase domain) with DLGAP1. Interacts (via the PDZ domains) with GRIN2A, GRID2 and NLGN1. Interacts with CTNND2, CTNNB1, MAGUIN-1, ACVR2A, SMAD2 and SMAD3. Part of a complex consisting of MAGI2/ARIP1, ACVR2A, ACVR1B and SMAD3. May interact with HTR2A. Interacts with IGSF9, RAPGEF2 and HTR4. Identified in a complex with ACTN4, CASK, IQGAP1, NPHS1, SPTAN1 and SPTBN1. Found in a complex, at least composed of KIDINS220, MAGI2, NTRK1 and RAPGEF2; the complex is mainly formed at late endosomes in a NGF-dependent manner. Interacts with RAPGEF2; the interaction occurs before or after nerve growth factor (NGF) stimulation. Interacts (via PDZ domain) with KIDINS220 (via C-terminal domain). Interacts with DDN. Interacts with DLL1. Found in a complex with IGSF9B and NLGN2; the interaction with IGSF9B is mediated via the PDZ 5 and PDZ 6 domains, while the interaction with NLGN2 is mediated via the WW1, WW2 and PDZ2 domains. Interacts (via PDZ 6 domain) with USH1G (via SAM domain); the interaction is triggered by phosphorylation of USH1G by CK2 and negatively regulates MAGI2-mediated endocytosis. As to expression, specifically expressed in brain.

Its subcellular location is the cytoplasm. The protein resides in the late endosome. The protein localises to the synapse. It is found in the synaptosome. It localises to the cell membrane. Its subcellular location is the cytoskeleton. The protein resides in the microtubule organizing center. The protein localises to the centrosome. It is found in the cell projection. It localises to the cilium. Its subcellular location is the centriole. The protein resides in the photoreceptor inner segment. The protein localises to the photoreceptor outer segment. Its function is as follows. Seems to act as a scaffold molecule at synaptic junctions by assembling neurotransmitter receptors and cell adhesion proteins. Plays a role in nerve growth factor (NGF)-induced recruitment of RAPGEF2 to late endosomes and neurite outgrowth. May play a role in regulating activin-mediated signaling in neuronal cells. Enhances the ability of PTEN to suppress AKT1 activation. Plays a role in receptor-mediated clathrin-dependent endocytosis which is required for ciliogenesis. The protein is Membrane-associated guanylate kinase, WW and PDZ domain-containing protein 2 (MAGI2) of Homo sapiens (Human).